The chain runs to 304 residues: MIKQRTIKQSVQETGIGLHKGDKVTMTLRPAPANTGIVFRRVDLEPHADIPARAEAVGDTMLCTCITNADGVSISTVEHLASALAGLGIDNIIVEVDSDELPIMDGSASPFIFLLQSVGIEELNAPKQFIKIKKAIKVKDGDKWAELRPHDGFRVDFRIDFDHPAISQTRQHMVLDFDSSSYVDEVSRARTFGFMKDLEYMNANNLALGGSMANAVALDEYRVLNPEGLRYSDEFLKHKILDAIGDLYLGGHSIIGELVAYKTGHGLNNKLLNALLQNQACWEFVSYDNSEELPIRFASPILAN.

Positions 79, 238, and 242 each coordinate Zn(2+). Catalysis depends on His-265, which acts as the Proton donor.

This sequence belongs to the LpxC family. Zn(2+) is required as a cofactor.

It carries out the reaction a UDP-3-O-[(3R)-3-hydroxyacyl]-N-acetyl-alpha-D-glucosamine + H2O = a UDP-3-O-[(3R)-3-hydroxyacyl]-alpha-D-glucosamine + acetate. It functions in the pathway glycolipid biosynthesis; lipid IV(A) biosynthesis; lipid IV(A) from (3R)-3-hydroxytetradecanoyl-[acyl-carrier-protein] and UDP-N-acetyl-alpha-D-glucosamine: step 2/6. Catalyzes the hydrolysis of UDP-3-O-myristoyl-N-acetylglucosamine to form UDP-3-O-myristoylglucosamine and acetate, the committed step in lipid A biosynthesis. The protein is UDP-3-O-acyl-N-acetylglucosamine deacetylase of Pseudoalteromonas atlantica (strain T6c / ATCC BAA-1087).